A 603-amino-acid polypeptide reads, in one-letter code: Growth-regulating factor 6 (603 aa).

The segment at 34–58 (KHGRGNAGDQEHEWRPPAKQARGGD) is disordered. Positions 158-193 (PFTPSQWIELEHQALIYKYLAANSPVPHSLLIPIRR) constitute a QLQ domain. The 45-residue stretch at 223 to 267 (DPEPGRCRRTDGKKWRCSRDAVADQKYCERHMNRGRHRSRKHVEG) folds into the WRC domain. 2 short sequence motifs (bipartite nuclear localization signal) span residues 228–238 (RCRRTDGKKWR) and 256–263 (RGRHRSRK). Residues 561–571 (FGSVSSSTGSS) are compositionally biased toward low complexity. The disordered stretch occupies residues 561–582 (FGSVSSSTGSSPRLENHSVYDG).

It belongs to the GRF family.

It localises to the nucleus. Functionally, transcription activator that plays a regulatory role in gibberellin-induced stem elongation. This chain is Growth-regulating factor 6 (GRF6), found in Oryza sativa subsp. japonica (Rice).